Consider the following 1248-residue polypeptide: Probable serine/threonine-protein kinase DDB_G0278509 (1248 aa).

Disordered regions lie at residues 1-26, 40-61, 100-125, 180-220, and 235-338; these read MSKV…NGEY, SVNG…EEDY, QSYK…DHLE, QNNN…TKNN, and SIDS…NNNK. Over residues 102–117 the composition is skewed to polar residues; sequence YKLSNSGESMNRSINQ. Over residues 181-216 the composition is skewed to low complexity; it reads NNNNNNSNSNSNSNSNSNNNNNNNNNNNNNNNNNNN. LRR repeat units follow at residues 386 to 407, 411 to 432, 435 to 457, 458 to 480, 481 to 502, 503 to 524, 527 to 548, 572 to 593, 595 to 616, 619 to 641, 642 to 663, 665 to 687, and 688 to 708; these read SSTE…DEKE, GYKI…AFTN, NLEQ…EFLK, HLTI…GNLS, FLRE…GNLY, NLKK…CVEP, QLQT…TTTT, NLKQ…LRHL, KLHS…VVAS, RLAK…NNLS, SLIE…ICYL, NLKK…GFLT, and KLVD…SFLK. A disordered region spans residues 825 to 873; that stretch reads YPFQKLDPIPQSLYSSSNPRSHTESDIQKLKNNDETITTTNSSISTTSS. Over residues 845–858 the composition is skewed to basic and acidic residues; it reads SHTESDIQKLKNND. The span at 860 to 873 shows a compositional bias: low complexity; the sequence is TITTTNSSISTTSS. The 294-residue stretch at 946 to 1239 folds into the Protein kinase domain; it reads IQFFNLIGQG…SIYHRLENLM (294 aa). ATP contacts are provided by residues 952 to 960 and Lys-973; that span reads IGQGGFSKV. Residue Asp-1069 is the Proton acceptor of the active site. Positions 1106–1135 are disordered; sequence NNTNNTATSSTTTSSANGANSISNNNNNGT.

Belongs to the protein kinase superfamily. TKL Ser/Thr protein kinase family.

The enzyme catalyses L-seryl-[protein] + ATP = O-phospho-L-seryl-[protein] + ADP + H(+). It carries out the reaction L-threonyl-[protein] + ATP = O-phospho-L-threonyl-[protein] + ADP + H(+). This chain is Probable serine/threonine-protein kinase DDB_G0278509, found in Dictyostelium discoideum (Social amoeba).